The chain runs to 243 residues: Ribosomal RNA small subunit methyltransferase G (243 aa).

S-adenosyl-L-methionine is bound by residues G79, F84, 130–131 (AE), and R150. Positions 222-243 (KPTPNKYPRKPGIPNKQPLGGA) are disordered.

It belongs to the methyltransferase superfamily. RNA methyltransferase RsmG family.

The protein resides in the cytoplasm. In terms of biological role, specifically methylates the N7 position of a guanine in 16S rRNA. The sequence is that of Ribosomal RNA small subunit methyltransferase G from Lacticaseibacillus paracasei (strain ATCC 334 / BCRC 17002 / CCUG 31169 / CIP 107868 / KCTC 3260 / NRRL B-441) (Lactobacillus paracasei).